The sequence spans 78 residues: Small outer capsid protein (78 aa).

This sequence belongs to the Tevenvirinae Soc family. As to quaternary structure, homotrimer. Interacts with the major capsid protein; three soc molecules associate with each interface between the major capsid protein facets.

The protein resides in the virion. Its function is as follows. Capsid decoration protein which helps to stabilize the capsid against extremes of pH and temperature. Once maturation and expansion of the capsid has occured, trimers of soc attach the interfaces between the hexamer of the major capsid protein. Acts as a 'glue' between neighboring hexameric capsomers. Dispensable for the head morphogenesis and phage infection. This chain is Small outer capsid protein, found in Escherichia phage RB69 (Bacteriophage RB69).